The primary structure comprises 140 residues: Nucleoside diphosphate kinase (140 aa).

ATP contacts are provided by lysine 11, phenylalanine 59, arginine 87, threonine 93, arginine 104, and asparagine 114. Catalysis depends on histidine 117, which acts as the Pros-phosphohistidine intermediate.

The protein belongs to the NDK family. Homotetramer. The cofactor is Mg(2+).

It is found in the cytoplasm. The enzyme catalyses a 2'-deoxyribonucleoside 5'-diphosphate + ATP = a 2'-deoxyribonucleoside 5'-triphosphate + ADP. It carries out the reaction a ribonucleoside 5'-diphosphate + ATP = a ribonucleoside 5'-triphosphate + ADP. Functionally, major role in the synthesis of nucleoside triphosphates other than ATP. The ATP gamma phosphate is transferred to the NDP beta phosphate via a ping-pong mechanism, using a phosphorylated active-site intermediate. This is Nucleoside diphosphate kinase from Chelativorans sp. (strain BNC1).